Here is a 386-residue protein sequence, read N- to C-terminus: Patatin-17 (386 aa).

A signal peptide spans 1–23; the sequence is MATTKSFLILIFMILATTSSTFA. The 198-residue stretch at 32–229 folds into the PNPLA domain; sequence LSIDGGGIRG…TVADPALLSI (198 aa). A GXGXXG motif is present at residues 36–41; sequence GGGIRG. The GXSXG signature appears at 75–79; sequence GTSTG. S77 serves as the catalytic Nucleophile. N202 carries an N-linked (GlcNAc...) asparagine glycan. The Proton acceptor role is filled by D215. A DGA/G motif is present at residues 215–217; it reads DGA. A coiled-coil region spans residues 321 to 384; the sequence is ENALTGTTTE…DRKKLRANKA (64 aa).

It belongs to the patatin family.

The protein resides in the vacuole. Functionally, non-specific lipolytic acyl hydrolase (LAH), an activity which is thought to be involved in the response of tubers to pathogens. Catalyzes the non-specific hydrolysis of phospholipids, glycolipids, sulfolipids, and mono- and diacylglycerols includng p-nitrophenyl caprate. Confers resistance to southern corn rootworm (SCRW). The sequence is that of Patatin-17 from Solanum cardiophyllum (Heartleaf nightshade).